Consider the following 121-residue polypeptide: Prefoldin subunit beta (121 aa).

The protein belongs to the prefoldin subunit beta family. As to quaternary structure, heterohexamer of two alpha and four beta subunits.

The protein resides in the cytoplasm. Its function is as follows. Molecular chaperone capable of stabilizing a range of proteins. Seems to fulfill an ATP-independent, HSP70-like function in archaeal de novo protein folding. In Methanoculleus marisnigri (strain ATCC 35101 / DSM 1498 / JR1), this protein is Prefoldin subunit beta.